Reading from the N-terminus, the 61-residue chain is UPF0434 protein TM1040_0056 (61 aa).

The protein belongs to the UPF0434 family.

This is UPF0434 protein TM1040_0056 from Ruegeria sp. (strain TM1040) (Silicibacter sp.).